Here is a 154-residue protein sequence, read N- to C-terminus: uncharacterized protein (154 aa).

Residues 14 to 146 form the HTH marR-type domain; it reads AMNLYRVFAR…LIVLLKKAGI (133 aa). A DNA-binding region (H-T-H motif) is located at residues 60 to 83; sequence LQQIGSRLLLVSGNVTYVIDKLER.

This is an uncharacterized protein from Bacillus subtilis (strain 168).